We begin with the raw amino-acid sequence, 829 residues long: MTAKFDVDYVLANITEDDKIALLSGSDFWHTHAIPKFNVPPIRTTDGPNGIRGTKFFAGVPAACLPCGTALGATWDRDLLHQAGVLLGKECLAKGAHCWLGPTINMQRSPLGGRGFESFAEDPHLSGIMAKSIILGCESTGVISTVKHYVGNDQEHERRAVDVLVTPRALREIYLRPFQIVARDAHPGALMTSYNKINGKHVVENPAMLDIVRKDWNWDPLIMSDWLGTYTTIDSMNAGLDLEMPGPTRYRGKYIESAMQARLIKQSTINKRARKVLEFVQRASRAPVSADETGRDFPEDRALNRTLCANSIVLLKNDGNLLPIPKTVKKIALIGSHVKTPAISGGGSASLEPYYAVSLYDAVVEALPDAKILYEAGAYAHKMLPVIDRMLSNAVIHFYNEPPEKERTLLATEPVVNTAFQLMDYNAPGLNRGLFWATLIGEFTPDVSGLWDFGLTVFGTATLFVDDEMVIDNTTRQTRGTAFFGKGTVQEVGQKQLTAGQTYKIRIEFGSANTSPMKAIGVVHFGGGAAHLGACLHMDPEQMVANAVKVAAEADYTIVCTGLNRDWESEGFDRPDMDLPPGIDALISSVLDLAADRTVIVNQSGTPVTLPWADRARGVVQAWYGGNETGHGIADVLFGDVNPCGKLPLSWPVDVKHNPAYLNNMSVGGRMLYGEDVYMGYRFYEKVGREVLFPFGHGLSYTTFSVSPEATVSPSVFSSDSPPTARVLVKNTGPVAGAQILQLYIAAPNSATPRPVKELHGFTKVFLQPGEERTVAIHIDKYATSFWDEIEDMWKSEEGVYQVLIGTSSQEIVSRGEFRVEQTRYWRGV.

Asn13 is a glycosylation site (N-linked (GlcNAc...) asparagine). Residue Asp225 is part of the active site. Residues Asn304, Asn473, Asn602, Asn627, and Asn664 are each glycosylated (N-linked (GlcNAc...) asparagine). In terms of domain architecture, PA14 spans 389 to 548 (RMLSNAVIHF…DPEQMVANAV (160 aa)).

It belongs to the glycosyl hydrolase 3 family.

It is found in the secreted. It catalyses the reaction Hydrolysis of terminal, non-reducing beta-D-glucosyl residues with release of beta-D-glucose.. The protein operates within glycan metabolism; cellulose degradation. Beta-glucosidases are one of a number of cellulolytic enzymes involved in the degradation of cellulosic biomass. Catalyzes the last step releasing glucose from the inhibitory cellobiose. This is Probable beta-glucosidase H (bglH) from Neosartorya fischeri (strain ATCC 1020 / DSM 3700 / CBS 544.65 / FGSC A1164 / JCM 1740 / NRRL 181 / WB 181) (Aspergillus fischerianus).